We begin with the raw amino-acid sequence, 122 residues long: Putative protein adenylyltransferase MJ1547 (122 aa).

The short motif at 11 to 25 (GSYAKNEYTKRSDID) is the GSX(10)DXD motif element. Mg(2+) is bound by residues aspartate 23, aspartate 25, and aspartate 48.

The protein belongs to the MntA antitoxin family. Probably forms a complex with cognate toxin MJ1548. It depends on Mg(2+) as a cofactor.

The catalysed reaction is L-tyrosyl-[protein] + ATP = O-(5'-adenylyl)-L-tyrosyl-[protein] + diphosphate. It catalyses the reaction O-(5'-adenylyl)-L-tyrosyl-[protein] + ATP = O-[5'-(adenylyl-(5'-&gt;3')-adenylyl)]-L-tyrosyl-[protein] + diphosphate. Probable antitoxin component of a putative type VII toxin-antitoxin (TA) system. Neutralizes cognate toxic MJ1548 by di-AMPylation. This Methanocaldococcus jannaschii (strain ATCC 43067 / DSM 2661 / JAL-1 / JCM 10045 / NBRC 100440) (Methanococcus jannaschii) protein is Putative protein adenylyltransferase MJ1547.